A 152-amino-acid polypeptide reads, in one-letter code: Transcriptional regulator MraZ (152 aa).

SpoVT-AbrB domains follow at residues 5–52 and 81–124; these read AQAI…PLKE and ATEC…SETE.

The protein belongs to the MraZ family. Forms oligomers.

It localises to the cytoplasm. Its subcellular location is the nucleoid. This chain is Transcriptional regulator MraZ, found in Mannheimia succiniciproducens (strain KCTC 0769BP / MBEL55E).